Reading from the N-terminus, the 156-residue chain is Small ribosomal subunit protein uS7 (156 aa).

Belongs to the universal ribosomal protein uS7 family. In terms of assembly, part of the 30S ribosomal subunit. Contacts proteins S9 and S11.

Functionally, one of the primary rRNA binding proteins, it binds directly to 16S rRNA where it nucleates assembly of the head domain of the 30S subunit. Is located at the subunit interface close to the decoding center, probably blocks exit of the E-site tRNA. This chain is Small ribosomal subunit protein uS7, found in Mycoplasmopsis agalactiae (strain NCTC 10123 / CIP 59.7 / PG2) (Mycoplasma agalactiae).